Consider the following 299-residue polypeptide: Regucalcin (299 aa).

An a divalent metal cation-binding site is contributed by E18. Substrate is bound by residues R101, N103, and E121. Residues N154 and D204 each coordinate a divalent metal cation. D204 (proton donor/acceptor) is an active-site residue.

It belongs to the SMP-30/CGR1 family. Requires Zn(2+) as cofactor. The cofactor is Mn(2+). Ca(2+) serves as cofactor. It depends on Mg(2+) as a cofactor. As to expression, expressed in the liver, and in the pronephros from the late tadpole stage.

The protein localises to the cytoplasm. It carries out the reaction D-glucono-1,5-lactone + H2O = D-gluconate + H(+). It functions in the pathway cofactor biosynthesis; L-ascorbate biosynthesis via UDP-alpha-D-glucuronate pathway; L-ascorbate from UDP-alpha-D-glucuronate: step 3/4. Gluconolactonase with low activity towards other sugar lactones, including gulonolactone and galactonolactone. Catalyzes a key step in ascorbic acid (vitamin C) biosynthesis. Can also hydrolyze diisopropyl phosphorofluoridate and phenylacetate (in vitro). Calcium-binding protein. Modulates Ca(2+) signaling, and Ca(2+)-dependent cellular processes and enzyme activities. In Xenopus laevis (African clawed frog), this protein is Regucalcin.